The following is a 416-amino-acid chain: Kynureninase (416 aa).

Pyridoxal 5'-phosphate-binding positions include Thr97, Ser98, Phe129–Asp132, Thr172, Asp201, His204, and Tyr226. The residue at position 227 (Lys227) is an N6-(pyridoxal phosphate)lysine. Pyridoxal 5'-phosphate contacts are provided by Trp256 and Thr282.

Belongs to the kynureninase family. As to quaternary structure, homodimer. It depends on pyridoxal 5'-phosphate as a cofactor.

It carries out the reaction L-kynurenine + H2O = anthranilate + L-alanine + H(+). It catalyses the reaction 3-hydroxy-L-kynurenine + H2O = 3-hydroxyanthranilate + L-alanine + H(+). It participates in amino-acid degradation; L-kynurenine degradation; L-alanine and anthranilate from L-kynurenine: step 1/1. Its pathway is cofactor biosynthesis; NAD(+) biosynthesis; quinolinate from L-kynurenine: step 2/3. Functionally, catalyzes the cleavage of L-kynurenine (L-Kyn) and L-3-hydroxykynurenine (L-3OHKyn) into anthranilic acid (AA) and 3-hydroxyanthranilic acid (3-OHAA), respectively. The polypeptide is Kynureninase (Pseudomonas fluorescens).